A 351-amino-acid chain; its full sequence is MSVRNSRPQLSWPERVSPQRTIDTPTASGEMLTRRQSAPALVVPPEETTHVVVVKRQSPDAAAAGELVPSRRKDSVAVQSGIVATGPLDTTRSGARDDFLMALLECPVCFGYIMPPIMQCPRGHLICSTCRSKLTICPVCRVFMTNIRSLAMEKVASKLIFPCKHSHFGCRARLSYAEKTKHEEDCECRPYFCPYPDDKCSWQGPLRDVYQHLMSSHENVITMEGNDIIFLATNVNLEGALDWTMVQSCHGRHFLLSLEKINLGEDCQQYFTACRMIGSMKDAAEFVYNISLEAYNRTLRWQSKPRSIRENFSSFTNADFLVLNKHTVELFSEDGNLALNVVIRKVEERTN.

The tract at residues 1 to 38 (MSVRNSRPQLSWPERVSPQRTIDTPTASGEMLTRRQSA) is disordered. A compositionally biased stretch (polar residues) spans 18 to 27 (PQRTIDTPTA). An RING-type zinc finger spans residues 106 to 141 (CPVCFGYIMPPIMQCPRGHLICSTCRSKLTICPVCR). The interval 155 to 346 (VASKLIFPCK…LALNVVIRKV (192 aa)) is SBD. The segment at 158-218 (KLIFPCKHSH…VYQHLMSSHE (61 aa)) adopts an SIAH-type zinc-finger fold. Residues Cys163, Cys170, His182, Cys186, Cys193, Cys200, His212, and His217 each coordinate Zn(2+).

Belongs to the SINA (Seven in absentia) family. As to quaternary structure, interacts with ebi and phyl.

The enzyme catalyses S-ubiquitinyl-[E2 ubiquitin-conjugating enzyme]-L-cysteine + [acceptor protein]-L-lysine = [E2 ubiquitin-conjugating enzyme]-L-cysteine + N(6)-ubiquitinyl-[acceptor protein]-L-lysine.. It functions in the pathway protein modification; protein ubiquitination. In terms of biological role, E3 ubiquitin-protein ligase that mediates ubiquitination and subsequent proteasomal degradation of target proteins. The adapter phyl is required to direct the degradation of the two isoforms of the transcriptional repressor Tramtrack (Ttk). E3 ubiquitin ligases accept ubiquitin from an E2 ubiquitin-conjugating enzyme in the form of a thioester and then directly transfers the ubiquitin to targeted substrates. It probably triggers the ubiquitin-mediated degradation of different substrates. A phyl-independent mechanism of degradation exists for isoform beta of ttk that involves motifs in the C-terminus of ttk. This is Probable E3 ubiquitin-protein ligase sinah (sinah) from Drosophila melanogaster (Fruit fly).